Reading from the N-terminus, the 338-residue chain is L-serine dehydratase (338 aa).

Lys-39 is modified (N6-(pyridoxal phosphate)lysine).

It belongs to the serine/threonine dehydratase family. The cofactor is pyridoxal 5'-phosphate.

Its subcellular location is the cytoplasm. It carries out the reaction L-serine = pyruvate + NH4(+). The protein operates within carbohydrate biosynthesis; gluconeogenesis. The chain is L-serine dehydratase (SDL1) from Saccharomyces cerevisiae (strain RM11-1a) (Baker's yeast).